The sequence spans 272 residues: Phosphoglycolate phosphatase (272 aa).

Residue aspartate 19 is the Nucleophile of the active site. Residues aspartate 19, aspartate 21, and aspartate 182 each contribute to the Mg(2+) site.

Belongs to the HAD-like hydrolase superfamily. CbbY/CbbZ/Gph/YieH family. Mg(2+) is required as a cofactor.

The catalysed reaction is 2-phosphoglycolate + H2O = glycolate + phosphate. It participates in organic acid metabolism; glycolate biosynthesis; glycolate from 2-phosphoglycolate: step 1/1. Functionally, specifically catalyzes the dephosphorylation of 2-phosphoglycolate. Is involved in the dissimilation of the intracellular 2-phosphoglycolate formed during the DNA repair of 3'-phosphoglycolate ends, a major class of DNA lesions induced by oxidative stress. This chain is Phosphoglycolate phosphatase, found in Pseudomonas syringae pv. syringae (strain B728a).